Here is a 343-residue protein sequence, read N- to C-terminus: Small ribosomal subunit biogenesis GTPase RsgA (343 aa).

A CP-type G domain is found at Arg-116–Phe-275. GTP-binding positions include Asn-163–Asp-166 and Gly-217–Ser-225. Zn(2+)-binding residues include Cys-299, Cys-304, His-306, and Cys-312.

This sequence belongs to the TRAFAC class YlqF/YawG GTPase family. RsgA subfamily. In terms of assembly, monomer. Associates with 30S ribosomal subunit, binds 16S rRNA. The cofactor is Zn(2+).

The protein localises to the cytoplasm. Its function is as follows. One of several proteins that assist in the late maturation steps of the functional core of the 30S ribosomal subunit. Helps release RbfA from mature subunits. May play a role in the assembly of ribosomal proteins into the subunit. Circularly permuted GTPase that catalyzes slow GTP hydrolysis, GTPase activity is stimulated by the 30S ribosomal subunit. The polypeptide is Small ribosomal subunit biogenesis GTPase RsgA (Azotobacter vinelandii (strain DJ / ATCC BAA-1303)).